We begin with the raw amino-acid sequence, 226 residues long: Thiocyanate methyltransferase 1 (226 aa).

The S-adenosyl-L-methionine site is built by Trp-35, Trp-39, Trp-46, and Gly-73. Ser-85 carries the phosphoserine modification. S-adenosyl-L-methionine is bound by residues Asp-94, 122–123 (DF), and Tyr-138.

The protein belongs to the class I-like SAM-binding methyltransferase superfamily. TPMT family. Ubiquitous.

It catalyses the reaction thiocyanate + S-adenosyl-L-methionine = methyl thiocyanate + S-adenosyl-L-homocysteine. S-adenosyl-L-methionine-dependent methyltransferase. Probably involved in glucosinolate metabolism and defense against phytopathogens. Highly reactive to thiocyanate (NCS(-)) derived from myrosinase-mediated hydrolysis of glucosinolates upon tissue damage. Also accepts halid ions as substrates with a lower affinity. The sequence is that of Thiocyanate methyltransferase 1 (TMT1) from Brassica oleracea (Wild cabbage).